The chain runs to 442 residues: Transcriptional coactivator YAP1 (442 aa).

Phosphoserine; by LATS1 and LATS2 occurs at positions 21, 69, and 87. Disordered stretches follow at residues 51 to 89 (LPDS…HSSP) and 97 to 116 (VSPG…QHLR). Phosphoserine; by LATS1 and LATS2 is present on serine 119. 2 WW domains span residues 126-159 (MPLP…DPRK) and 186-219 (GPLP…DPRL). The tract at residues 230–254 (ISQSAPVKQGSQLPSSPQSGVMSGN) is disordered. The segment covering 238-249 (QGSQLPSSPQSG) has biased composition (low complexity). The transactivation domain stretch occupies residues 247–442 (QSGVMSGNNP…IDKENFLTWL (196 aa)). The stretch at 258–279 (RLQQIHIEKERLRIKQELLRQR) forms a coiled coil. A disordered region spans residues 286-374 (RNQLPTSMEQ…DTLGPGSMAT (89 aa)). 3 stretches are compositionally biased toward polar residues: residues 288–304 (QLPT…NPVS), 313–329 (RNMT…SGTY), and 337–347 (DSGLSMSSYSV).

Belongs to the YAP1 family. Phosphorylated by lats1 and lats2; leading to cytoplasmic translocation and inactivation. Expressed in the notochord, brain, eyes, branchial arches and pectoral fins.

Its subcellular location is the cytoplasm. The protein resides in the nucleus. The protein localises to the cell junction. It localises to the tight junction. It is found in the cell membrane. Transcriptional regulator which can act both as a coactivator and a corepressor and is the critical downstream regulatory target in the Hippo signaling pathway that plays a pivotal role in organ size control and tumor suppression by restricting proliferation and promoting apoptosis. Required for expansion of the neural plate and neural plate border zone progenitor pools. Acts as a direct regulator of pax3 expression via interaction with tead1. Plays a key role in tissue tension and 3D tissue shape by regulating cortical actomyosin network formation. The protein is Transcriptional coactivator YAP1 (yap1) of Danio rerio (Zebrafish).